Reading from the N-terminus, the 384-residue chain is GTPase Obg (384 aa).

The Obg domain maps to 1–159 (MKFIDEAKIE…RSLQLELKVL (159 aa)). Residues 20-46 (ATSFRREKFVPRGGPDGGDGGKGGSVW) are disordered. Over residues 33 to 43 (GPDGGDGGKGG) the composition is skewed to gly residues. The 189-residue stretch at 160 to 348 (ADVGLLGMPN…LVHQINQYLI (189 aa)) folds into the OBG-type G domain. GTP-binding positions include 166 to 173 (GMPNAGKS), 191 to 195 (FTTLH), 213 to 216 (DIPG), 284 to 287 (NKLD), and 329 to 331 (SAL). Mg(2+)-binding residues include S173 and T193. The tract at residues 364–384 (ATNVEIAEQQPKTDTGVFKPE) is disordered.

The protein belongs to the TRAFAC class OBG-HflX-like GTPase superfamily. OBG GTPase family. In terms of assembly, monomer. The cofactor is Mg(2+).

The protein resides in the cytoplasm. An essential GTPase which binds GTP, GDP and possibly (p)ppGpp with moderate affinity, with high nucleotide exchange rates and a fairly low GTP hydrolysis rate. Plays a role in control of the cell cycle, stress response, ribosome biogenesis and in those bacteria that undergo differentiation, in morphogenesis control. The chain is GTPase Obg from Neisseria meningitidis serogroup A / serotype 4A (strain DSM 15465 / Z2491).